An 864-amino-acid polypeptide reads, in one-letter code: Nitrate reductase [NADH] (864 aa).

C139 contributes to the Mo-molybdopterin binding site. Residues 497–572 form the Cytochrome b5 heme-binding domain; it reads PRQYTMEEVA…LAQYYIGDLV (76 aa). Residues H532 and H555 each coordinate heme. The 113-residue stretch at 606–718 folds into the FAD-binding FR-type domain; the sequence is RQKVKLPLIE…KGPLGHFVYD (113 aa). Residues 658–661, 675–679, F680, F687, 692–694, and T746 each bind FAD; these read RAYT, LIKVY, and KMS.

The protein belongs to the nitrate reductase family. Homodimer. FAD is required as a cofactor. Requires heme as cofactor. Mo-molybdopterin serves as cofactor.

It carries out the reaction nitrite + NAD(+) + H2O = nitrate + NADH + H(+). Functionally, nitrate reductase is a key enzyme involved in the first step of nitrate assimilation in plants, fungi and bacteria. This Volvox carteri (Green alga) protein is Nitrate reductase [NADH] (NITA).